A 486-amino-acid polypeptide reads, in one-letter code: Probable cytosol aminopeptidase (486 aa).

Mn(2+) contacts are provided by Lys-256 and Asp-261. Residue Lys-268 is part of the active site. Mn(2+) contacts are provided by Asp-280, Asp-339, and Glu-341. Residue Arg-343 is part of the active site.

This sequence belongs to the peptidase M17 family. Requires Mn(2+) as cofactor.

It is found in the cytoplasm. The catalysed reaction is Release of an N-terminal amino acid, Xaa-|-Yaa-, in which Xaa is preferably Leu, but may be other amino acids including Pro although not Arg or Lys, and Yaa may be Pro. Amino acid amides and methyl esters are also readily hydrolyzed, but rates on arylamides are exceedingly low.. It catalyses the reaction Release of an N-terminal amino acid, preferentially leucine, but not glutamic or aspartic acids.. Functionally, presumably involved in the processing and regular turnover of intracellular proteins. Catalyzes the removal of unsubstituted N-terminal amino acids from various peptides. This Synechococcus sp. (strain ATCC 27144 / PCC 6301 / SAUG 1402/1) (Anacystis nidulans) protein is Probable cytosol aminopeptidase.